Here is a 343-residue protein sequence, read N- to C-terminus: Dihydroorotase (343 aa).

Positions 13 and 15 each coordinate Zn(2+). Substrate is bound by residues 15 to 17 (HLR) and Asn41. Zn(2+) is bound by residues Lys99, His136, and His174. N6-carboxylysine is present on Lys99. His136 lines the substrate pocket. Leu219 provides a ligand contact to substrate. Residue Asp247 participates in Zn(2+) binding. The active site involves Asp247. 2 residues coordinate substrate: His251 and Ala263.

This sequence belongs to the metallo-dependent hydrolases superfamily. DHOase family. Class II DHOase subfamily. As to quaternary structure, homodimer. It depends on Zn(2+) as a cofactor.

The catalysed reaction is (S)-dihydroorotate + H2O = N-carbamoyl-L-aspartate + H(+). It functions in the pathway pyrimidine metabolism; UMP biosynthesis via de novo pathway; (S)-dihydroorotate from bicarbonate: step 3/3. Catalyzes the reversible cyclization of carbamoyl aspartate to dihydroorotate. In Shewanella baltica (strain OS223), this protein is Dihydroorotase.